The chain runs to 173 residues: Insertion element IS150 protein InsJ (173 aa).

It belongs to the IS150/IS1296 orfA family.

This chain is Insertion element IS150 protein InsJ (insJ), found in Escherichia coli (strain K12).